Here is a 356-residue protein sequence, read N- to C-terminus: 4-hydroxy-3-methylbut-2-en-1-yl diphosphate synthase (flavodoxin) (356 aa).

Residues Cys264, Cys267, Cys299, and Glu306 each contribute to the [4Fe-4S] cluster site.

It belongs to the IspG family. [4Fe-4S] cluster is required as a cofactor.

It catalyses the reaction (2E)-4-hydroxy-3-methylbut-2-enyl diphosphate + oxidized [flavodoxin] + H2O + 2 H(+) = 2-C-methyl-D-erythritol 2,4-cyclic diphosphate + reduced [flavodoxin]. It participates in isoprenoid biosynthesis; isopentenyl diphosphate biosynthesis via DXP pathway; isopentenyl diphosphate from 1-deoxy-D-xylulose 5-phosphate: step 5/6. Its function is as follows. Converts 2C-methyl-D-erythritol 2,4-cyclodiphosphate (ME-2,4cPP) into 1-hydroxy-2-methyl-2-(E)-butenyl 4-diphosphate. The polypeptide is 4-hydroxy-3-methylbut-2-en-1-yl diphosphate synthase (flavodoxin) (Campylobacter lari (strain RM2100 / D67 / ATCC BAA-1060)).